A 200-amino-acid polypeptide reads, in one-letter code: MAKVLVLYYSSYGHVETMAQQVAEGAKSVPGVEVTLKRVPETIPADQAKAIGIKTDQAAPVATVDELADYDAILFGTPTRFGNMAGQMRTFLDQTGGLWMKGALVGKIGSVFASTGTQHGGQETTITSFHTTLLHHGMVIVGVPYACSGLVNMNEITGGTPYGATTLAGADGSRQPSANELDIARYQGKHVAELAVKLAS.

The Flavodoxin-like domain occupies 4–191 (VLVLYYSSYG…DIARYQGKHV (188 aa)). Residues 10 to 15 (SSYGHV) and 79 to 81 (TRF) contribute to the FMN site. Tyrosine 12 is a binding site for NAD(+). Residue tryptophan 99 coordinates substrate. FMN contacts are provided by residues 114–120 (STGTQHG) and histidine 135.

The protein belongs to the WrbA family. Requires FMN as cofactor.

The enzyme catalyses a quinone + NADH + H(+) = a quinol + NAD(+). It catalyses the reaction a quinone + NADPH + H(+) = a quinol + NADP(+). This Burkholderia multivorans (strain ATCC 17616 / 249) protein is NAD(P)H dehydrogenase (quinone).